Consider the following 264-residue polypeptide: Proliferating cell nuclear antigen (264 aa).

Residues R61 to K80 mediate DNA binding.

Belongs to the PCNA family.

It localises to the nucleus. Its function is as follows. This protein is an auxiliary protein of DNA polymerase delta and is involved in the control of eukaryotic DNA replication by increasing the polymerase's processibility during elongation of the leading strand. The chain is Proliferating cell nuclear antigen from Daucus carota (Wild carrot).